Here is a 299-residue protein sequence, read N- to C-terminus: Serine/threonine-protein kinase 1 (299 aa).

The 239-residue stretch at 39 to 277 (IATKPMFEGG…FKGLVSHPWF (239 aa)) folds into the Protein kinase domain. Residues 45–53 (FEGGRRNNV) and lysine 66 each bind ATP. The active-site Proton acceptor is the aspartate 153.

The protein belongs to the protein kinase superfamily. Ser/Thr protein kinase family.

It localises to the virion. Its subcellular location is the host cytoplasm. It catalyses the reaction L-seryl-[protein] + ATP = O-phospho-L-seryl-[protein] + ADP + H(+). The catalysed reaction is L-threonyl-[protein] + ATP = O-phospho-L-threonyl-[protein] + ADP + H(+). Essential for viral replication. It may mediate the virus progression through DNA replication. The protein is Serine/threonine-protein kinase 1 of African swine fever virus (isolate Pig/Kenya/KEN-50/1950) (ASFV).